Reading from the N-terminus, the 83-residue chain is MKTGIHPDYAPVVFRDLASGATFLTRSTVSSQKTIEWEDGSTYPVIDVEISSESHPFYTGKQRILDSAGRVEKFNTRYKNFGK.

This sequence belongs to the bacterial ribosomal protein bL31 family. Type B subfamily. In terms of assembly, part of the 50S ribosomal subunit.

The sequence is that of Large ribosomal subunit protein bL31B from Leifsonia xyli subsp. xyli (strain CTCB07).